Reading from the N-terminus, the 248-residue chain is Phosphoadenosine 5'-phosphosulfate reductase (248 aa).

The Nucleophile; cysteine thiosulfonate intermediate role is filled by Cys-239.

The protein belongs to the PAPS reductase family. CysH subfamily.

The protein localises to the cytoplasm. The enzyme catalyses [thioredoxin]-disulfide + sulfite + adenosine 3',5'-bisphosphate + 2 H(+) = [thioredoxin]-dithiol + 3'-phosphoadenylyl sulfate. Its pathway is sulfur metabolism; hydrogen sulfide biosynthesis; sulfite from sulfate: step 3/3. Catalyzes the formation of sulfite from phosphoadenosine 5'-phosphosulfate (PAPS) using thioredoxin as an electron donor. This Alteromonas mediterranea (strain DSM 17117 / CIP 110805 / LMG 28347 / Deep ecotype) protein is Phosphoadenosine 5'-phosphosulfate reductase.